A 288-amino-acid polypeptide reads, in one-letter code: Energy-coupling factor transporter ATP-binding protein EcfA2 (288 aa).

The 243-residue stretch at 3–245 folds into the ABC transporter domain; the sequence is IEFKNVDYIY…PDWLKKHFLD (243 aa). 40 to 47 is a binding site for ATP; it reads GHTGSGKS.

The protein belongs to the ABC transporter superfamily. Energy-coupling factor EcfA family. Forms a stable energy-coupling factor (ECF) transporter complex composed of 2 membrane-embedded substrate-binding proteins (S component), 2 ATP-binding proteins (A component) and 2 transmembrane proteins (T component).

It is found in the cell membrane. Its function is as follows. ATP-binding (A) component of a common energy-coupling factor (ECF) ABC-transporter complex. Unlike classic ABC transporters this ECF transporter provides the energy necessary to transport a number of different substrates. This chain is Energy-coupling factor transporter ATP-binding protein EcfA2, found in Lactobacillus gasseri (strain ATCC 33323 / DSM 20243 / BCRC 14619 / CIP 102991 / JCM 1131 / KCTC 3163 / NCIMB 11718 / NCTC 13722 / AM63).